We begin with the raw amino-acid sequence, 906 residues long: Protein translocase subunit SecA (906 aa).

Residues Gln89, 107 to 111 (GEGKT), and Asp502 contribute to the ATP site. Positions 885, 887, 896, and 897 each coordinate Zn(2+).

The protein belongs to the SecA family. In terms of assembly, monomer and homodimer. Part of the essential Sec protein translocation apparatus which comprises SecA, SecYEG and auxiliary proteins SecDF-YajC and YidC. Requires Zn(2+) as cofactor.

It localises to the cell inner membrane. Its subcellular location is the cytoplasm. The enzyme catalyses ATP + H2O + cellular proteinSide 1 = ADP + phosphate + cellular proteinSide 2.. Functionally, part of the Sec protein translocase complex. Interacts with the SecYEG preprotein conducting channel. Has a central role in coupling the hydrolysis of ATP to the transfer of proteins into and across the cell membrane, serving both as a receptor for the preprotein-SecB complex and as an ATP-driven molecular motor driving the stepwise translocation of polypeptide chains across the membrane. In Rhizobium rhizogenes (strain K84 / ATCC BAA-868) (Agrobacterium radiobacter), this protein is Protein translocase subunit SecA.